The chain runs to 309 residues: PI-PLC X domain-containing protein 1 (309 aa).

The PI-PLC X-box domain occupies 17–193 (HMWDIPLWNL…QVILSYDDES (177 aa)).

The polypeptide is PI-PLC X domain-containing protein 1 (plcxd1) (Danio rerio (Zebrafish)).